Consider the following 321-residue polypeptide: Cilia- and flagella-associated protein 161 (321 aa).

The tract at residues leucine 275–methionine 321 is disordered. Positions proline 285–valine 299 are enriched in basic and acidic residues.

Microtubule inner protein component of sperm flagellar doublet microtubules. As to expression, expressed in trachea multiciliated cells.

It is found in the cytoplasm. It localises to the cytoskeleton. Its subcellular location is the cilium axoneme. The protein localises to the flagellum axoneme. Microtubule inner protein (MIP) part of the dynein-decorated doublet microtubules (DMTs) in cilia axoneme, which is required for motile cilia beating. In Bos taurus (Bovine), this protein is Cilia- and flagella-associated protein 161.